We begin with the raw amino-acid sequence, 249 residues long: Transcription initiation factor TFIID subunit 9B (249 aa).

N-acetylmethionine is present on M1. S147 bears the Phosphoserine mark. The segment at 148–171 (AVSSRPTTPPVAPPQAVSGPNKAA) is disordered. At T172 the chain carries Phosphothreonine. S175 carries the post-translational modification Phosphoserine. Polar residues predominate over residues 224–234 (VSSQNTATDSN). The segment at 224 to 249 (VSSQNTATDSNPLKRKHDDDDDNDTM) is disordered.

This sequence belongs to the TAF9 family. Binds TAF5 and TAF6. Component of TFIID and the TATA-binding protein-free TAF complex (TFTC). TFIID is composed of TATA binding protein (TBP) and a number of TBP-associated factors (TAFs). Binds N-terminal domain of p53/TP53 which is essential for transcription.

The protein localises to the nucleus. Essential for cell viability. TAF9 and TAF9B are involved in transcriptional activation as well as repression of distinct but overlapping sets of genes. May have a role in gene regulation associated with apoptosis. TAFs are components of the transcription factor IID (TFIID) complex, the TBP-free TAFII complex (TFTC), the PCAF histone acetylase complex and the STAGA transcription coactivator-HAT complex. TFIID or TFTC are essential for the regulation of RNA polymerase II-mediated transcription. The protein is Transcription initiation factor TFIID subunit 9B (Taf9b) of Mus musculus (Mouse).